The following is a 401-amino-acid chain: Dual-specificity RNA methyltransferase RlmN (401 aa).

Glu-114 acts as the Proton acceptor in catalysis. The Radical SAM core domain maps to 120 to 365 (DKTRGTLCVS…TMVRRTRGDD (246 aa)). Cys-127 and Cys-370 are disulfide-bonded. Residues Cys-134, Cys-138, and Cys-141 each coordinate [4Fe-4S] cluster. Residues 187 to 188 (GE), Ser-219, 241 to 243 (SLH), and Asn-327 each bind S-adenosyl-L-methionine. Cys-370 serves as the catalytic S-methylcysteine intermediate.

The protein belongs to the radical SAM superfamily. RlmN family. Requires [4Fe-4S] cluster as cofactor.

The protein resides in the cytoplasm. It catalyses the reaction adenosine(2503) in 23S rRNA + 2 reduced [2Fe-2S]-[ferredoxin] + 2 S-adenosyl-L-methionine = 2-methyladenosine(2503) in 23S rRNA + 5'-deoxyadenosine + L-methionine + 2 oxidized [2Fe-2S]-[ferredoxin] + S-adenosyl-L-homocysteine. The enzyme catalyses adenosine(37) in tRNA + 2 reduced [2Fe-2S]-[ferredoxin] + 2 S-adenosyl-L-methionine = 2-methyladenosine(37) in tRNA + 5'-deoxyadenosine + L-methionine + 2 oxidized [2Fe-2S]-[ferredoxin] + S-adenosyl-L-homocysteine. In terms of biological role, specifically methylates position 2 of adenine 2503 in 23S rRNA and position 2 of adenine 37 in tRNAs. m2A2503 modification seems to play a crucial role in the proofreading step occurring at the peptidyl transferase center and thus would serve to optimize ribosomal fidelity. This is Dual-specificity RNA methyltransferase RlmN from Stenotrophomonas maltophilia (strain R551-3).